We begin with the raw amino-acid sequence, 273 residues long: Large ribosomal subunit protein uL2 (273 aa).

Residues 221–273 (RGTAMNPVDHPHGGGEGRNFGKHPVSPWGVQTKGKKTRHNKRTDKYIVRRRGK) are disordered. A compositionally biased stretch (basic residues) spans 253–273 (KGKKTRHNKRTDKYIVRRRGK).

It belongs to the universal ribosomal protein uL2 family. Part of the 50S ribosomal subunit. Forms a bridge to the 30S subunit in the 70S ribosome.

Functionally, one of the primary rRNA binding proteins. Required for association of the 30S and 50S subunits to form the 70S ribosome, for tRNA binding and peptide bond formation. It has been suggested to have peptidyltransferase activity; this is somewhat controversial. Makes several contacts with the 16S rRNA in the 70S ribosome. This is Large ribosomal subunit protein uL2 from Mannheimia succiniciproducens (strain KCTC 0769BP / MBEL55E).